The chain runs to 126 residues: Probable flagellum biosynthesis repressor protein FlbT (126 aa).

The protein belongs to the FlbT family.

Its function is as follows. Has a post-transcriptional repressor function in flagellum biogenesis. Associates with the 5'-UTR of fljK mRNA and promotes its degradation. This chain is Probable flagellum biosynthesis repressor protein FlbT, found in Rhodopseudomonas palustris (strain ATCC BAA-98 / CGA009).